The following is a 1201-amino-acid chain: Putative disease resistance protein At4g19050 (1201 aa).

33-40 (GEAGIGKT) provides a ligand contact to ATP. LRR repeat units lie at residues 469–491 (KLRV…SGLQ), 492–514 (GLHV…FFKN), 517–539 (QLQS…EKLS), 540–562 (MLRC…IVET), 680–701 (ELRI…IADV), 703–725 (NLNK…EKLT), 726–748 (HLEV…FGEM), 750–771 (YLHE…ISEL), 773–795 (NLKE…EKLT), 796–818 (NLEI…FENL), 820–841 (CLHK…ISEL), 843–865 (NLKE…EKLT), 866–888 (HLVI…FESM), and 890–911 (YLCE…PKQS). Basic and acidic residues predominate over residues 1162–1180 (DEPRIGARITDEISEDQPH). The tract at residues 1162–1201 (DEPRIGARITDEISEDQPHKNTIGPETQTPTQPTKATDTV) is disordered. The segment covering 1185 to 1201 (GPETQTPTQPTKATDTV) has biased composition (polar residues).

This sequence belongs to the disease resistance NB-LRR family.

Its function is as follows. Potential disease resistance protein. The protein is Putative disease resistance protein At4g19050 of Arabidopsis thaliana (Mouse-ear cress).